We begin with the raw amino-acid sequence, 676 residues long: Envelope glycoprotein (676 aa).

The signal sequence occupies residues 1-32; it reads MEGLSLLQLPRDKFRKSSFFVWVIILFQKAFS. At 33 to 650 the chain is on the extracellular side; sequence MPLGVVTNST…DDNWWTGWRQ (618 aa). The N-linked (GlcNAc...) asparagine; by host glycan is linked to asparagine 40. 5 disulfides stabilise this stretch: cysteine 53–cysteine 609, cysteine 108–cysteine 135, cysteine 121–cysteine 147, cysteine 511–cysteine 556, and cysteine 601–cysteine 608. The receptor-binding stretch occupies residues 54–201; it reads KDHLASTDQL…TFLQSPPIRE (148 aa). Residues asparagine 204, asparagine 208, asparagine 238, asparagine 257, asparagine 268, asparagine 296, and asparagine 314 are each glycosylated (N-linked (GlcNAc...) asparagine; by host). The segment at 305–485 is mucin-like region; sequence ELSFETLSLN…STSNGLITST (181 aa). Residues 312–351 form a disordered region; that stretch reads SLNETEDDDATSSRTTKGRISDRATRKYSDLVPKDSPGMV. Residues 330-344 show a composition bias toward basic and acidic residues; it reads RISDRATRKYSDLVP. Asparagine 366 is a glycosylation site (N-linked (GlcNAc...) asparagine; by host). The segment at 406–458 is disordered; sequence SSSQILSSSPTMAPSPETQTSTTYTPKLPVMTTEEPTTPPRNSPGSTTEAPTL. Composition is skewed to polar residues over residues 415–430 and 448–458; these read PTMA…TTYT and SPGSTTEAPTL. A glycan (N-linked (GlcNAc...) asparagine; by host) is linked at asparagine 463. Residues 524 to 539 form a fusion peptide region; sequence HNAAGIAWIPYFGPGA. Positions 554-595 form a coiled coil; that stretch reads LVCGLRQLANETTQALQLFLRATTELRTYTILNRKAIDFLLR. A glycan (N-linked (GlcNAc...) asparagine; by host) is linked at asparagine 563. Residues 615–634 adopt a coiled-coil conformation; the sequence is WTKNITDKINQIIHDFIDNP. A glycan (N-linked (GlcNAc...) asparagine; by host) is linked at asparagine 618. The helical transmembrane segment at 651–671 threads the bilayer; sequence WIPAGIGITGIIIAIIALLCV. Residues cysteine 670 and cysteine 672 are each lipidated (S-palmitoyl cysteine; by host). At 672 to 676 the chain is on the cytoplasmic side; that stretch reads CKLLC.

It belongs to the filoviruses glycoprotein family. As to quaternary structure, homotrimer; each monomer consists of a GP1 and a GP2 subunit linked by disulfide bonds. The resulting peplomers (GP1,2) protrude from the virus surface as spikes. Interacts with host integrin alpha-V/ITGAV. Interacts with host CLEC10A. Binds also to host CD209 and CLEC4M/DC-SIGN(R). Interacts with host FOLR1. Interacts with BST2; this interaction inhibits the antiviral effect of BST2 and this allows viral release from infected cells. Interacts with host FCN1; this interaction enhances viral entry. Interacts with host TLR4; this interaction induces cell death in T-lymphocytes or proinflammatory cytokines and SOCS1 production in monocytes. In terms of assembly, interacts with host entry receptor NPC1. GP1 and GP2delta are part of GP1,2delta soluble complexes released by ectodomain shedding. Post-translationally, the signal peptide region modulates GP's high mannose glycosylation, thereby determining the efficiency of the interactions with DC-SIGN(R). In terms of processing, N-glycosylated. O-glycosylated in the mucin-like region. Post-translationally, palmitoylation of GP2 is not required for its function. In terms of processing, specific enzymatic cleavages in vivo yield mature proteins. The precursor is processed into GP1 and GP2 by host cell furin in the trans Golgi, and maybe by other host proteases, to yield the mature GP1 and GP2 proteins. The cleavage site corresponds to the furin optimal cleavage sequence [KR]-X-[KR]-R. This cleavage does not seem to be required for function. After the internalization of the virus into cell endosomes, GP1 C-terminus is removed by the endosomal proteases cathepsin B, cathepsin L, or both, leaving a 19-kDa N-terminal fragment which is further digested by cathepsin B. Proteolytic processing of GP1,2 by host ADAM17 can remove the transmembrane anchor of GP2 and leads to shedding of complexes consisting in GP1 and truncated GP2 (GP1,2delta).

It localises to the virion membrane. Its subcellular location is the host cell membrane. It is found in the secreted. Functionally, trimeric GP1,2 complexes form the virion surface spikes and mediate the viral entry processes, with GP1 acting as the receptor-binding subunit and GP2 as the membrane fusion subunit. At later times of infection, down-regulates the expression of various host cell surface molecules that are essential for immune surveillance and cell adhesion. Down-modulates several integrins including ITGA1, ITGA2, ITGA3, ITGA4, ITGA5, ITGA6, ITGAV and ITGB1. This decrease in cell adhesion molecules may lead to cell detachment, contributing to the disruption of blood vessel integrity and hemorrhages developed during infection (cytotoxicity). Interacts with host TLR4 and thereby stimulates the differentiation and activation of monocytes leading to bystander death of T-lymphocytes. Down-regulates as well the function of host natural killer cells. Counteracts the antiviral effect of host BST2/tetherin that restricts release of progeny virions from infected cells. However, cooperates with VP40 and host BST2 to activate canonical NF-kappa-B pathway in a manner dependent on neddylation. Functions as a decoy for anti-GP1,2 antibodies thereby contributing to viral immune evasion. Interacts and activates host macrophages and dendritic cells inducing up-regulation of cytokine transcription. This effect is mediated throught activation of host TLR4. Its function is as follows. Responsible for binding to the receptor(s) on target cells. Interacts with CD209/DC-SIGN and CLEC4M/DC-SIGNR which act as cofactors for virus entry into dendritic cells (DCs) and endothelial cells. Binding to the macrophage specific lectin CLEC10A also seems to enhance virus infectivity. Interaction with FOLR1/folate receptor alpha may be a cofactor for virus entry in some cell types, although results are contradictory. Members of the Tyro3 receptor tyrosine kinase family also seem to be cell entry factors in filovirus infection. Once attached, the virions are internalized through clathrin-dependent endocytosis and/or macropinocytosis. After internalization of the virus into the endosomes of the host cell, proteolysis of GP1 by two cysteine proteases, CTSB/cathepsin B and CTSL/cathepsin L removes the glycan cap and allows GP1 binding to the host entry receptor NPC1. NPC1-binding, Ca(2+) and acidic pH induce a conformational change of GP2, which unmasks its fusion peptide and permit membranes fusion. In terms of biological role, acts as a class I viral fusion protein. Under the current model, the protein has at least 3 conformational states: pre-fusion native state, pre-hairpin intermediate state, and post-fusion hairpin state. During viral and target cell membrane fusion, the coiled coil regions (heptad repeats) assume a trimer-of-hairpins structure, positioning the fusion peptide in close proximity to the C-terminal region of the ectodomain. The formation of this structure appears to drive apposition and subsequent fusion of viral and target cell membranes. Responsible for penetration of the virus into the cell cytoplasm by mediating the fusion of the membrane of the endocytosed virus particle with the endosomal membrane. Low pH in endosomes induces an irreversible conformational change in GP2, releasing the fusion hydrophobic peptide. This is Envelope glycoprotein (GP) from Sudan ebolavirus (strain Maleo-79) (SEBOV).